The primary structure comprises 53 residues: Large ribosomal subunit protein eL40 (53 aa).

The protein belongs to the eukaryotic ribosomal protein eL40 family.

This is Large ribosomal subunit protein eL40 from Pyrobaculum aerophilum (strain ATCC 51768 / DSM 7523 / JCM 9630 / CIP 104966 / NBRC 100827 / IM2).